Consider the following 90-residue polypeptide: Small ribosomal subunit protein uS17 (90 aa).

Belongs to the universal ribosomal protein uS17 family. As to quaternary structure, part of the 30S ribosomal subunit.

In terms of biological role, one of the primary rRNA binding proteins, it binds specifically to the 5'-end of 16S ribosomal RNA. The chain is Small ribosomal subunit protein uS17 from Acidiphilium cryptum (strain JF-5).